The following is a 250-amino-acid chain: Enoyl-[acyl-carrier-protein] reductase [NADPH] FabL (250 aa).

NADP(+) is bound by residues 13–16 (SRGV), 36–38 (ARS), 62–63 (NV), and Asn-89. Active-site proton acceptor residues include Tyr-151 and Lys-158. NADP(+)-binding positions include Lys-158 and 187–189 (IDT).

Belongs to the short-chain dehydrogenases/reductases (SDR) family. In terms of assembly, homotetramer.

The enzyme catalyses a 2,3-saturated acyl-[ACP] + NADP(+) = a (2E)-enoyl-[ACP] + NADPH + H(+). It carries out the reaction (2E)-butenoyl-[ACP] + NADPH + H(+) = butanoyl-[ACP] + NADP(+). It participates in lipid metabolism; fatty acid biosynthesis. Its activity is regulated as follows. Inhibited by triclosan. Functionally, catalyzes the reduction of a carbon-carbon double bond in an enoyl moiety that is covalently linked to an acyl carrier protein (ACP). It confers resistance to triclosan. This is Enoyl-[acyl-carrier-protein] reductase [NADPH] FabL (fabL) from Bacillus subtilis (strain 168).